Reading from the N-terminus, the 432-residue chain is CBL-interacting serine/threonine-protein kinase 17 (432 aa).

The Protein kinase domain occupies 11–266; that stretch reads YELGRTLGEG…IAGIKAHDWF (256 aa). Residues 17-25 and lysine 40 each bind ATP; that span reads LGEGNSAKV. Aspartate 134 acts as the Proton acceptor in catalysis. The segment at 152–181 is activation loop; it reads DFGLSALSQHYREDGLLHTTCGSPNYVAPE. A Phosphoserine modification is found at serine 156. The residue at position 170 (threonine 170) is a Phosphothreonine. The NAF domain maps to 301 to 325; that stretch reads DSPTIINAFQLIGMSSFLDLSGFFE. The interval 331–360 is PPI; it reads ERQIRFTSNSLAKDLLENIETIFTEMGFCL.

It belongs to the protein kinase superfamily. CAMK Ser/Thr protein kinase family. SNF1 subfamily. As to quaternary structure, interacts with CBL1. Mn(2+) serves as cofactor.

The catalysed reaction is L-seryl-[protein] + ATP = O-phospho-L-seryl-[protein] + ADP + H(+). It carries out the reaction L-threonyl-[protein] + ATP = O-phospho-L-threonyl-[protein] + ADP + H(+). In terms of biological role, CIPK serine-threonine protein kinases interact with CBL proteins. Binding of a CBL protein to the regulatory NAF domain of CIPK protein lead to the activation of the kinase in a calcium-dependent manner. The polypeptide is CBL-interacting serine/threonine-protein kinase 17 (CIPK17) (Arabidopsis thaliana (Mouse-ear cress)).